Reading from the N-terminus, the 491-residue chain is uncharacterized protein (491 aa).

Position 267–274 (267–274) interacts with ATP; the sequence is GIQGTGKS.

Belongs to the AAA ATPase family. Highly divergent.

It is found in the plastid. Its subcellular location is the chloroplast. This is an uncharacterized protein from Gracilaria tenuistipitata var. liui (Red alga).